Consider the following 213-residue polypeptide: Redox-sensing transcriptional repressor Rex (213 aa).

Residues 18–57 constitute a DNA-binding region (H-T-H motif); sequence LYYRFLKNLHASGKQRVSSAELSEAVKVDPATIRRDFSYF. NAD(+) is bound at residue 92-97; it reads GVGNLG.

This sequence belongs to the transcriptional regulatory Rex family. Homodimer.

It localises to the cytoplasm. In terms of biological role, modulates transcription in response to changes in cellular NADH/NAD(+) redox state. This is Redox-sensing transcriptional repressor Rex from Geobacillus kaustophilus (strain HTA426).